We begin with the raw amino-acid sequence, 179 residues long: Ribosome maturation factor RimM (179 aa).

The 76-residue stretch at 99–174 folds into the PRC barrel domain; sequence EEDEYYFDQI…IMIVDLPEGL (76 aa).

This sequence belongs to the RimM family. In terms of assembly, binds ribosomal protein uS19.

Its subcellular location is the cytoplasm. An accessory protein needed during the final step in the assembly of 30S ribosomal subunit, possibly for assembly of the head region. Essential for efficient processing of 16S rRNA. May be needed both before and after RbfA during the maturation of 16S rRNA. It has affinity for free ribosomal 30S subunits but not for 70S ribosomes. This chain is Ribosome maturation factor RimM, found in Natranaerobius thermophilus (strain ATCC BAA-1301 / DSM 18059 / JW/NM-WN-LF).